A 185-amino-acid polypeptide reads, in one-letter code: Acireductone dioxygenase (185 aa).

Positions 96, 98, 102, and 140 each coordinate Fe(2+). Ni(2+) is bound by residues H96, H98, E102, and H140.

Belongs to the acireductone dioxygenase (ARD) family. In terms of assembly, monomer. Requires Fe(2+) as cofactor. Ni(2+) is required as a cofactor.

It catalyses the reaction 1,2-dihydroxy-5-(methylsulfanyl)pent-1-en-3-one + O2 = 3-(methylsulfanyl)propanoate + CO + formate + 2 H(+). The catalysed reaction is 1,2-dihydroxy-5-(methylsulfanyl)pent-1-en-3-one + O2 = 4-methylsulfanyl-2-oxobutanoate + formate + 2 H(+). Its pathway is amino-acid biosynthesis; L-methionine biosynthesis via salvage pathway; L-methionine from S-methyl-5-thio-alpha-D-ribose 1-phosphate: step 5/6. Catalyzes 2 different reactions between oxygen and the acireductone 1,2-dihydroxy-3-keto-5-methylthiopentene (DHK-MTPene) depending upon the metal bound in the active site. Fe-containing acireductone dioxygenase (Fe-ARD) produces formate and 2-keto-4-methylthiobutyrate (KMTB), the alpha-ketoacid precursor of methionine in the methionine recycle pathway. Ni-containing acireductone dioxygenase (Ni-ARD) produces methylthiopropionate, carbon monoxide and formate, and does not lie on the methionine recycle pathway. In Marinobacter nauticus (strain ATCC 700491 / DSM 11845 / VT8) (Marinobacter aquaeolei), this protein is Acireductone dioxygenase.